A 299-amino-acid chain; its full sequence is Nucleoporin POM34 (299 aa).

The disordered stretch occupies residues 1–39 (MKIQAGQLGLDDNDVPGPLPDTDSKPSSQSQNDTPMFKL). Polar residues predominate over residues 25–34 (KPSSQSQNDT). The next 2 helical transmembrane spans lie at 64 to 84 (IMTNVIAFAFWNLLVKFIKFF) and 133 to 153 (LFHLLISLNILFSLWKLLSTV). The residue at position 270 (serine 270) is a Phosphoserine. Position 273 is a phosphothreonine (threonine 273). 2 positions are modified to phosphoserine: serine 292 and serine 294.

In terms of assembly, component of the nuclear pore complex (NPC). NPC constitutes the exclusive means of nucleocytoplasmic transport. NPCs allow the passive diffusion of ions and small molecules and the active, nuclear transport receptor-mediated bidirectional transport of macromolecules such as proteins, RNAs, ribonucleoparticles (RNPs), and ribosomal subunits across the nuclear envelope. Due to its 8-fold rotational symmetry, all subunits are present with 8 copies or multiples thereof.

It is found in the nucleus. It localises to the nuclear pore complex. The protein localises to the nucleus membrane. Functions as a component of the nuclear pore complex (NPC). NPC components, collectively referred to as nucleoporins (NUPs), can play the role of both NPC structural components and of docking or interaction partners for transiently associated nuclear transport factors. The chain is Nucleoporin POM34 (POM34) from Saccharomyces cerevisiae (strain ATCC 204508 / S288c) (Baker's yeast).